The following is an 80-amino-acid chain: Raniseptin-8 (80 aa).

The first 22 residues, Met1–Cys22, serve as a signal peptide directing secretion. Positions Glu23 to Glu49 are excised as a propeptide. A disordered region spans residues Arg27–Glu46. A compositionally biased stretch (acidic residues) spans Glu30 to Glu44.

This sequence belongs to the frog skin active peptide (FSAP) family. Dermaseptin subfamily. Expressed by the skin glands.

It localises to the secreted. Its function is as follows. Has antibacterial activity. This Boana raniceps (Chaco tree frog) protein is Raniseptin-8.